The following is a 257-amino-acid chain: MLAKRIVPCLDVKDGCVVKGVQFRNHEIVGDIVPLAARYAAEGADELVFYDITASAHDRVVDKSWVSRVAEQIDIPFCVAGGIKTIGQARELLAFGADKISVNSPALSDPSLISRLQDEFGRQCIVIGIDSFYDAASDSYKVKQFTGDEAATKETAWYTQDWVEEVQKRGCGEIVLNVMNQDGVRGGYDIKQLSLVRQLCDVPLIASGGAGTMAHFRDVFIEAKVDAALAASVFHKAIINIGELKQYLAAEGIAIRQ.

Residues D11 and D130 contribute to the active site.

Belongs to the HisA/HisF family. Heterodimer of HisH and HisF.

It is found in the cytoplasm. The enzyme catalyses 5-[(5-phospho-1-deoxy-D-ribulos-1-ylimino)methylamino]-1-(5-phospho-beta-D-ribosyl)imidazole-4-carboxamide + L-glutamine = D-erythro-1-(imidazol-4-yl)glycerol 3-phosphate + 5-amino-1-(5-phospho-beta-D-ribosyl)imidazole-4-carboxamide + L-glutamate + H(+). The protein operates within amino-acid biosynthesis; L-histidine biosynthesis; L-histidine from 5-phospho-alpha-D-ribose 1-diphosphate: step 5/9. IGPS catalyzes the conversion of PRFAR and glutamine to IGP, AICAR and glutamate. The HisF subunit catalyzes the cyclization activity that produces IGP and AICAR from PRFAR using the ammonia provided by the HisH subunit. The sequence is that of Imidazole glycerol phosphate synthase subunit HisF from Shewanella sp. (strain MR-4).